The sequence spans 110 residues: Urease subunit beta (110 aa).

It belongs to the urease beta subunit family. In terms of assembly, heterotrimer of UreA (gamma), UreB (beta) and UreC (alpha) subunits. Three heterotrimers associate to form the active enzyme.

It is found in the cytoplasm. The enzyme catalyses urea + 2 H2O + H(+) = hydrogencarbonate + 2 NH4(+). It functions in the pathway nitrogen metabolism; urea degradation; CO(2) and NH(3) from urea (urease route): step 1/1. In Pseudoalteromonas translucida (strain TAC 125), this protein is Urease subunit beta.